A 120-amino-acid polypeptide reads, in one-letter code: Spermidine export protein MdtJ (120 aa).

4 helical membrane-spanning segments follow: residues 1 to 21 (MFYW…TLSM), 31 to 51 (TGFI…SFAV), 54 to 74 (IALG…ITLF), and 81 to 101 (EALS…IVLI).

Belongs to the drug/metabolite transporter (DMT) superfamily. Small multidrug resistance (SMR) (TC 2.A.7.1) family. MdtJ subfamily. Forms a complex with MdtI.

It localises to the cell inner membrane. Functionally, catalyzes the excretion of spermidine. The chain is Spermidine export protein MdtJ from Enterobacter sp. (strain 638).